We begin with the raw amino-acid sequence, 138 residues long: PTS system sorbose-specific EIIA component (138 aa).

Residues methionine 1–leucine 125 form the PTS EIIA type-4 domain. Histidine 8 functions as the Tele-phosphohistidine intermediate in the catalytic mechanism. Histidine 8 bears the Phosphohistidine; by HPr mark.

It is found in the cytoplasm. Functionally, the phosphoenolpyruvate-dependent sugar phosphotransferase system (PTS), a major carbohydrate active transport system, catalyzes the phosphorylation of incoming sugar substrates concomitant with their translocation across the cell membrane. The enzyme II SorABCD PTS system is involved in L-sorbose transport. In Lacticaseibacillus casei (Lactobacillus casei), this protein is PTS system sorbose-specific EIIA component.